The primary structure comprises 1239 residues: MDFIPTQTFYGRRWRPAPVQRYIPQPQPPAPPRRRRGPSQLQQLVAALGALALQPKQKQKRAQKKPKKTPPPKPKKTQKPKKPTQKKKSKPGKRMRNCMKIENDCIFPVMLDGKVNGYACLVGDKVMKPAHVKGTIDNPELAKLTFKKSSKYDLECAQVPVCMKSDASKFTHEKPEGHYNWHHGAVQFSNGRFTIPTGSGKPGDSGRPIFDNTGKVVAIVLGGANEGARTALSVVTWNKDMVTRITPEESVEWSAAALNITALCVLQNLSFPCDAPPCAPCCYEKDPAGTLRLLSDHYYHPKYYELLDSTMHCPQGRRPKRSVAHFEAYKATRPYIGWCADCGLAGSCPSPVSIEHVWSDADDGVLKIQVSMQIGIAKSNTINHAKIRYMGANGVQEAERSTLSVSTTAPCDILATMGHFILARCRPGSQVEVSLSTDPKLLCRTPFSHKPRFIGNEKSPAPTGHKTRIPCKTYSHQTDLTREEITMHVPPDVPIQGLVSNTGKSYSLDPKTKTIKYKCTCGETVKEGTATNKITLFNCDTAPKCITYAVDNTVWQYNSQYVPRSEVTEVKGKIHVPFPLTDSTCAVSVAPEPQVTYRLGEVEFHFHPMYPTLFSIRSLGKDPSHSQEWIDTPMSKTIQVGAEGVEYVWGNNNPVRLWAQKSSSSSAHGNPISIVSHYYDLYPYWTITVLASLGLLIVISSGFSCFLCSVARTKCLTPYQLAPGAQLPTFIALLCCAKSARADTLDDFSYLWTNNQAMFWLQLASPVAAFLCLSYCCRNLACCMKIFLGISGLCVIATQAYEHSTTMPNQVGIPFKALIERPGYAGLPLSLVVIKSELVPSLVQDYITCNYKTVVPSPYIKCCGGAECSHKNEADYKCSVFTGVYPFMWGGAYCFCDTENSQMSEVYVTRGESCEADHAIAYQVHTASLKAQVMISIGELNQTVDVFVNGDSPARIQQSKFILGPISSAWSPFDHKVIVYRDEVYNEDYAPYGSGQAGRFGDIQSRTVNSTDVYANTNLKLKRPASGNVHVPYTQTPSGFSYWKKEKGVPLNRNAPFGCIIKVNPVRAENCVYGNIPISMDIADAHFTRIDESPSVSLKACEVQSCTYSSDFGGVASISYTSNKVGKCAIHSHSNSATMKDSVQDVQESGALSLFFATSSVEPNFVVQVCNARITCHGKCEPPKDHIVPYAAKHNDAEFPSISTTAWQWLAHTTSGPLTILVVAIIVVVVVSIVVCARH.

The segment at 15-95 (RPAPVQRYIP…KKKSKPGKRM (81 aa)) is disordered. The segment at 36–62 (RGPSQLQQLVAALGALALQPKQKQKRA) is host transcription inhibition. Over residues 38-56 (PSQLQQLVAALGALALQPK) the composition is skewed to low complexity. The short motif at 55 to 91 (PKQKQKRAQKKPKKTPPPKPKKTQKPKKPTQKKKSKP) is the Nuclear localization signal element. Residues 57–95 (QKQKRAQKKPKKTPPPKPKKTQKPKKPTQKKKSKPGKRM) show a composition bias toward basic residues. Residues 78–106 (QKPKKPTQKKKSKPGKRMRNCMKIENDCI) are binding to the viral RNA. The interval 91–105 (PGKRMRNCMKIENDC) is ribosome-binding. Residues Cys-105 and Cys-120 are joined by a disulfide bond. In terms of domain architecture, Peptidase S3 spans 105-253 (CIFPVMLDGK…RITPEESVEW (149 aa)). Residue His-131 is the Charge relay system of the active site. The short motif at 136 to 146 (IDNPELAKLTF) is the Nuclear export signal element. Residues 147-152 (KKSSKY) are interaction with spike glycoprotein E2. Residue Asp-153 is the Charge relay system of the active site. The dimerization of the capsid protein stretch occupies residues 175-185 (PEGHYNWHHGA). The Charge relay system role is filled by Ser-205. The dimerization of the capsid protein stretch occupies residues 211–215 (DNTGK). The segment at 254–269 (SAAALNITALCVLQNL) is functions as an uncleaved signal peptide for the precursor of protein E3/E2. Disulfide bonds link Cys-264-Cys-273, Cys-278-Cys-282, Cys-281-Cys-313, Cys-339-Cys-443, Cys-342-Cys-348, Cys-411-Cys-425, Cys-471-Cys-585, Cys-519-Cys-545, and Cys-521-Cys-539. N-linked (GlcNAc...) asparagine; by host glycosylation is present at Asn-268. At 322 to 686 (SVAHFEAYKA…HYYDLYPYWT (365 aa)) the chain is on the extracellular side. Residues 687–707 (ITVLASLGLLIVISSGFSCFL) traverse the membrane as a helical segment. S-palmitoyl cysteine; by host attachment occurs at residues Cys-705 and Cys-708. Over 708–751 (CSVARTKCLTPYQLAPGAQLPTFIALLCCAKSARADTLDDFSYL) the chain is Cytoplasmic. The interaction with the capsid protein stretch occupies residues 710-714 (VARTK). 3 S-palmitoyl cysteine; by host lipidation sites follow: Cys-715, Cys-735, and Cys-736. Cys-715 and Cys-736 form a disulfide bridge. The Extracellular segment spans residues 752–756 (WTNNQ). Residues 757–777 (AMFWLQLASPVAAFLCLSYCC) traverse the membrane as a helical segment. The Cytoplasmic portion of the chain corresponds to 778–779 (RN). Residues 780–800 (LACCMKIFLGISGLCVIATQA) form a helical membrane-spanning segment. Residues 801-1216 (YEHSTTMPNQ…WQWLAHTTSG (416 aa)) lie on the Extracellular side of the membrane. Cystine bridges form between Cys-849-Cys-914, Cys-862-Cys-894, Cys-863-Cys-896, and Cys-868-Cys-878. Positions 884–901 (VYPFMWGGAYCFCDTENS) are E1 fusion peptide loop. Residues Asn-941, Asn-1009, and Asn-1070 are each glycosylated (N-linked (GlcNAc...) asparagine; by host). 4 disulfides stabilise this stretch: Cys-1059–Cys-1071, Cys-1101–Cys-1176, Cys-1106–Cys-1180, and Cys-1128–Cys-1170. Residues 1217–1237 (PLTILVVAIIVVVVVSIVVCA) form a helical membrane-spanning segment. Cys-1236 carries S-palmitoyl cysteine; by host lipidation. Over 1238–1239 (RH) the chain is Cytoplasmic.

Homodimer. Homomultimer. Interacts with host karyopherin KPNA4; this interaction allows the nuclear import of the viral capsid protein. Interacts with spike glycoprotein E2. Interacts with host IRAK1; the interaction leads to inhibition of IRAK1-dependent signaling. As to quaternary structure, the precursor of protein E3/E2 and E1 form a heterodimer shortly after synthesis. In terms of assembly, interacts with spike glycoprotein E1. The precursor of protein E3/E2 and E1 form a heterodimer shortly after synthesis. Processing of the precursor of protein E3/E2 into E2 and E3 results in a heterodimer of the spike glycoproteins E2 and E1. Spike at virion surface are constituted of a trimer of E2-E1 heterodimers. After target cell attachment and endocytosis, E1 change conformation to form homotrimers. Interacts with 6K protein. Interacts with spike glycoprotein E1. Processing of the precursor of protein E3/E2 into E2 and E3 results in a heterodimer of the spike glycoproteins E2 and E1. Spike at virion surface are constituted of a trimer of E2-E1 heterodimers. Interacts with 6K protein. Interacts with host MXRA8; this interaction mediates virus entry. Interacts with the capsid protein. As to quaternary structure, oligomer. Interacts with spike glycoprotein E1. Interacts with spike glycoprotein E2. Structural polyprotein: Specific enzymatic cleavages in vivo yield mature proteins. Capsid protein is auto-cleaved during polyprotein translation, unmasking a signal peptide at the N-terminus of the precursor of E3/E2. The remaining polyprotein is then targeted to the host endoplasmic reticulum, where host signal peptidase cleaves it into pE2, 6K and E1 proteins. pE2 is further processed to mature E3 and E2 by host furin in trans-Golgi vesicle. In terms of processing, palmitoylated via thioester bonds. These palmitoylations may induce disruption of the C-terminus transmembrane. This would result in the reorientation of E2 C-terminus from lumenal to cytoplasmic side. Post-translationally, N-glycosylated. Palmitoylated via thioester bonds.

Its subcellular location is the virion. The protein localises to the host cytoplasm. It localises to the host cell membrane. It is found in the host nucleus. The protein resides in the virion membrane. Its subcellular location is the host Golgi apparatus. The protein localises to the host trans-Golgi network. It localises to the host endoplasmic reticulum. The enzyme catalyses Autocatalytic release of the core protein from the N-terminus of the togavirus structural polyprotein by hydrolysis of a -Trp-|-Ser- bond.. Forms an icosahedral capsid with a T=4 symmetry composed of 240 copies of the capsid protein surrounded by a lipid membrane through which penetrate 80 spikes composed of trimers of E1-E2 heterodimers. The capsid protein binds to the viral RNA genome at a site adjacent to a ribosome binding site for viral genome translation following genome release. Possesses a protease activity that results in its autocatalytic cleavage from the nascent structural protein. Following its self-cleavage, the capsid protein transiently associates with ribosomes, and within several minutes the protein binds to viral RNA and rapidly assembles into icosahedric core particles. The resulting nucleocapsid eventually associates with the cytoplasmic domain of the spike glycoprotein E2 at the cell membrane, leading to budding and formation of mature virions. In case of infection, new virions attach to target cells and after clathrin-mediated endocytosis their membrane fuses with the host endosomal membrane. This leads to the release of the nucleocapsid into the cytoplasm, followed by an uncoating event necessary for the genomic RNA to become accessible. The uncoating might be triggered by the interaction of capsid proteins with ribosomes. Binding of ribosomes would release the genomic RNA since the same region is genomic RNA-binding and ribosome-binding. Specifically inhibits interleukin-1 receptor-associated kinase 1/IRAK1-dependent signaling during viral entry, representing a means by which the alphaviruses may evade innate immune detection and activation prior to viral gene expression. Its function is as follows. Provides the signal sequence for the translocation of the precursor of protein E3/E2 to the host endoplasmic reticulum. Furin-cleaved E3 remains associated with spike glycoprotein E1 and mediates pH protection of the latter during the transport via the secretory pathway. After virion release from the host cell, the assembly protein E3 is gradually released in the extracellular space. In terms of biological role, plays a role in viral attachment to target host cell, by binding to the cell receptor MXRA8. Synthesized as a p62 precursor which is processed by furin at the cell membrane just before virion budding, giving rise to E2-E1 heterodimer. The p62-E1 heterodimer is stable, whereas E2-E1 is unstable and dissociate at low pH. p62 is processed at the last step, presumably to avoid E1 fusion activation before its final export to cell surface. E2 C-terminus contains a transitory transmembrane that would be disrupted by palmitoylation, resulting in reorientation of the C-terminal tail from lumenal to cytoplasmic side. This step is critical since E2 C-terminus is involved in budding by interacting with capsid proteins. This release of E2 C-terminus in cytoplasm occurs lately in protein export, and precludes premature assembly of particles at the endoplasmic reticulum membrane. Functionally, acts as a viroporin that participates in virus glycoprotein processing and transport to the plasma membrane, cell permeabilization and budding of viral particles. The cation channel is permeable to Na(+)&gt;K(+)&gt;Ca(2+) in vitro. Disrupts the calcium homeostasis of the cell, probably at the endoplasmic reticulum level. This leads to cytoplasmic calcium elevation. Because of its lipophilic properties, the 6K protein is postulated to influence the selection of lipids that interact with the transmembrane domains of the glycoproteins, which, in turn, affects the deformability of the bilayer required for the extreme curvature that occurs as budding proceeds. Present in low amount in virions, about 3% compared to viral glycoproteins. Class II viral fusion protein. Fusion activity is inactive as long as E1 is bound to E2 in mature virion. After virus attachment to target cell via host MXRA8 and endocytosis, acidification of the endosome induce dissociation of E1/E2 heterodimer and concomitant trimerization of the E1 subunits. This E1 trimer is fusion active, and promotes release of viral nucleocapsid in cytoplasm after endosome and viral membrane fusion. Efficient fusion requires the presence of cholesterol and sphingolipid in the target membrane. The chain is Structural polyprotein from Anopheles amictus (Common banded mosquito).